The primary structure comprises 4134 residues: DNA-dependent protein kinase catalytic subunit (4134 aa).

HEAT repeat units follow at residues 900–937, 1000–1036, and 1050–1085; these read VIYL…VAYM, QDTV…LKWS, and ANTK…YREF. TPR repeat units lie at residues 1265–1305 and 1722–1755; these read YNTF…HDIH and PMSS…SQSP. A Phosphoserine; by autocatalysis modification is found at serine 2055. Residues 2207–2240 form a TPR 3 repeat; that stretch reads DEILANRLLEFLMKNAFHQKRAVFRHNLEIIKTV. Threonine 2609 is subject to Phosphothreonine; by autocatalysis. Over residues 2611 to 2629 the composition is skewed to polar residues; it reads ASQSTNRNSSQERSLSISG. Positions 2611-2631 are disordered; that stretch reads ASQSTNRNSSQERSLSISGSV. Serine 2612 is subject to Phosphoserine; by autocatalysis. Phosphothreonine; by autocatalysis is present on residues threonine 2638 and threonine 2647. In terms of domain architecture, FAT spans 2880–3545; it reads NVSTSCLASL…IYPFTISSES (666 aa). Residues 3728–4059 enclose the PI3K/PI4K catalytic domain; the sequence is FDERIMVLES…VSYVKRKLTG (332 aa). The G-loop stretch occupies residues 3734 to 3740; that stretch reads VLESLRK. A catalytic loop region spans residues 3925-3933; sequence GIGDRHLSN. The tract at residues 3945-3970 is activation loop; that stretch reads GIDFGHAFGSATQFLPVPELMPFRLT. The 33-residue stretch at 4102–4134 folds into the FATC domain; it reads DRLSEETQVRCLIDQATDPNLLGRVWEGWEPWM.

This sequence belongs to the PI3/PI4-kinase family. DNA-PK is a heterotrimer of PRKDC and the Ku dimer (composed of XRCC6/Ku70 and XRCC5/Ku86). Component of the core long-range non-homologous end joining (NHEJ) complex (also named DNA-PK complex) composed of PRKDC, LIG4, XRCC4, XRCC6/Ku70, XRCC5/Ku86 and NHEJ1/XLF. Additional component of the NHEJ complex includes PAXX. Following autophosphorylation, PRKDC dissociates from DNA. Autophosphorylated at two clusters, the T2609 cluster and the S2056 cluster. Autophosphorylated on Ser-2055, Thr-2609, Thr-2638 and Thr-2647. Ser-2055 and Thr-2609 are DNA damage-inducible phosphorylation sites (inducible with ionizing radiation, IR) dephosphorylated by PPP5C. Autophosphorylation induces a conformational change that leads to remodeling of the DNA-PK complex, requisite for efficient end processing and DNA repair. Autophosphorylation in trans within DNA-PK complexes loaded on DNA ends leads to the dissociation of PRKDC from DNA and the transition into the short-range NHEJ complex. Autophosphorylation of the T2609 cluster is required for hematopoietic development and protein synthesis in erythrocytes precursors.

Its subcellular location is the nucleus. It is found in the nucleolus. It carries out the reaction L-seryl-[protein] + ATP = O-phospho-L-seryl-[protein] + ADP + H(+). It catalyses the reaction L-threonyl-[protein] + ATP = O-phospho-L-threonyl-[protein] + ADP + H(+). Functionally, serine/threonine-protein kinase that acts as a molecular sensor for DNA damage. Involved in DNA nonhomologous end joining (NHEJ) required for double-strand break (DSB) repair and V(D)J recombination. Must be bound to DNA to express its catalytic properties. Promotes processing of hairpin DNA structures in V(D)J recombination by activation of the hairpin endonuclease artemis (DCLRE1C). Recruited by XRCC5 and XRCC6 to DNA ends and is required to (1) protect and align broken ends of DNA, thereby preventing their degradation, (2) and sequester the DSB for repair by NHEJ. Acts as a scaffold protein to aid the localization of DNA repair proteins to the site of damage. The assembly of the DNA-PK complex at DNA ends is also required for the NHEJ ligation step. Found at the ends of chromosomes, suggesting a further role in the maintenance of telomeric stability and the prevention of chromosomal end fusion. As part of the DNA-PK complex, involved in the early steps of ribosome assembly by promoting the processing of precursor rRNA into mature 18S rRNA in the small-subunit processome. Recognizes the substrate consensus sequence [ST]-Q. Phosphorylates 'Ser-139' of histone variant H2AX, thereby regulating DNA damage response mechanism. In Gallus gallus (Chicken), this protein is DNA-dependent protein kinase catalytic subunit (PRKDC).